The sequence spans 368 residues: 4-hydroxy-3-methylbut-2-en-1-yl diphosphate synthase (flavodoxin) (368 aa).

Positions 268, 271, 303, and 310 each coordinate [4Fe-4S] cluster.

The protein belongs to the IspG family. The cofactor is [4Fe-4S] cluster.

It carries out the reaction (2E)-4-hydroxy-3-methylbut-2-enyl diphosphate + oxidized [flavodoxin] + H2O + 2 H(+) = 2-C-methyl-D-erythritol 2,4-cyclic diphosphate + reduced [flavodoxin]. The protein operates within isoprenoid biosynthesis; isopentenyl diphosphate biosynthesis via DXP pathway; isopentenyl diphosphate from 1-deoxy-D-xylulose 5-phosphate: step 5/6. Functionally, converts 2C-methyl-D-erythritol 2,4-cyclodiphosphate (ME-2,4cPP) into 1-hydroxy-2-methyl-2-(E)-butenyl 4-diphosphate. The protein is 4-hydroxy-3-methylbut-2-en-1-yl diphosphate synthase (flavodoxin) of Bacillus cytotoxicus (strain DSM 22905 / CIP 110041 / 391-98 / NVH 391-98).